The following is a 75-amino-acid chain: Protein RALF-like 9 (75 aa).

Positions 1–28 (MGMSKSIKVILSLALVVFLALAATKVEA) are cleaved as a signal peptide. Disulfide bonds link cysteine 46–cysteine 54 and cysteine 66–cysteine 72.

It belongs to the plant rapid alkalinization factor (RALF) family.

It localises to the secreted. In terms of biological role, cell signaling peptide that may regulate plant stress, growth, and development. Mediates a rapid alkalinization of extracellular space by mediating a transient increase in the cytoplasmic Ca(2+) concentration leading to a calcium-dependent signaling events through a cell surface receptor and a concomitant activation of some intracellular mitogen-activated protein kinases. The chain is Protein RALF-like 9 (RALFL9) from Arabidopsis thaliana (Mouse-ear cress).